A 429-amino-acid chain; its full sequence is Trigger factor (429 aa).

The PPIase FKBP-type domain occupies 164-249 (GDTAVIDFEG…VKEVKTKVLP (86 aa)).

Belongs to the FKBP-type PPIase family. Tig subfamily.

The protein resides in the cytoplasm. It carries out the reaction [protein]-peptidylproline (omega=180) = [protein]-peptidylproline (omega=0). In terms of biological role, involved in protein export. Acts as a chaperone by maintaining the newly synthesized protein in an open conformation. Functions as a peptidyl-prolyl cis-trans isomerase. The polypeptide is Trigger factor (Lysinibacillus sphaericus (strain C3-41)).